The primary structure comprises 317 residues: Protein IMPACT-B (317 aa).

An RWD domain is found at 17-118; the sequence is EEIEALSSIY…EKIREFLTEK (102 aa). Residues 296-317 are disordered; sequence DSTEETSKAGGKSKKPKSKKTK. The span at 306–317 shows a compositional bias: basic residues; sequence GKSKKPKSKKTK.

It belongs to the IMPACT family. In terms of assembly, interacts with GCN1; prevents the interaction of GCN1 with EIF2AK4/GCN2 and inhibits EIF2AK4/GCN2 kinase activity. Interaction with RPL39; this interaction occurs in a GCN1-independent manner. Associates with ribosomes; this interaction occurs in a GCN1-independent manner. Associates with actin; this interaction occurs in a GCN1-independent manner.

The protein resides in the cytoplasm. Translational regulator that ensures constant high levels of translation upon a variety of stress conditions, such as amino acid starvation, UV-C irradiation, proteasome inhibitor treatment and glucose deprivation. Plays a role as a negative regulator of the EIF2AK4/GCN2 kinase activity; impairs GCN1-mediated EIF2AK4/GCN2 activation, and hence EIF2AK4/GCN2-mediated eIF-2-alpha phosphorylation and subsequent down-regulation of protein synthesis. Plays a role in differentiation of neuronal cells by stimulating neurite outgrowth. The protein is Protein IMPACT-B (impact-B) of Xenopus tropicalis (Western clawed frog).